Here is a 775-residue protein sequence, read N- to C-terminus: Semaphorin-3E (775 aa).

The first 25 residues, 1–25 (MASAGHIITLLLWGYLLELWTGGHT), serve as a signal peptide directing secretion. Residues 32-516 (RLRLSHKELL…SASAVAQVRF (485 aa)) form the Sema domain. The N-linked (GlcNAc...) asparagine glycan is linked to Asn44. Residues Cys105 and Cys115 are joined by a disulfide bond. N-linked (GlcNAc...) asparagine glycosylation occurs at Asn126. Disulfide bonds link Cys133/Cys142, Cys270/Cys382, Cys294/Cys342, and Cys519/Cys537. Asn330 carries N-linked (GlcNAc...) asparagine glycosylation. The 89-residue stretch at 581–669 (ALDKTEEHLA…SFVHTVRKIT (89 aa)) folds into the Ig-like C2-type domain. Asn595 and Asn596 each carry an N-linked (GlcNAc...) asparagine glycan. Cys654 and Cys729 are oxidised to a cystine. The segment at 742–775 (LKMSPSKWKYANPQEKKLRSKPEHYRLPRHTLDS) is disordered. Over residues 755–775 (QEKKLRSKPEHYRLPRHTLDS) the composition is skewed to basic and acidic residues.

It belongs to the semaphorin family. As to quaternary structure, interacts with PLXND1.

The protein localises to the secreted. Plays an important role in signaling via the cell surface receptor PLXND1. Mediates reorganization of the actin cytoskeleton, leading to the retraction of cell projections. Promotes focal adhesion disassembly and inhibits adhesion of endothelial cells to the extracellular matrix. Regulates angiogenesis, both during embryogenesis and after birth. Can down-regulate sprouting angiogenesis. Required for normal vascular patterning during embryogenesis. Plays an important role in ensuring the specificity of synapse formation. The polypeptide is Semaphorin-3E (SEMA3E) (Homo sapiens (Human)).